The sequence spans 146 residues: Hemoglobin subunit beta (146 aa).

At Val1 the chain carries N-acetylvaline. The 145-residue stretch at 2–146 folds into the Globin domain; the sequence is HLTPEEKSAV…VANALAHKYH (145 aa). Position 12 is a phosphothreonine (Thr12). Ser44 carries the phosphoserine modification. Lys59 is modified (N6-acetyllysine). His63 is a binding site for heme b. Position 82 is an N6-acetyllysine (Lys82). His92 serves as a coordination point for heme b. An S-nitrosocysteine modification is found at Cys93. N6-acetyllysine is present on Lys144.

It belongs to the globin family. As to quaternary structure, heterotetramer of two alpha chains and two beta chains. As to expression, red blood cells.

Involved in oxygen transport from the lung to the various peripheral tissues. The chain is Hemoglobin subunit beta (HBB) from Hylobates lar (Lar gibbon).